Consider the following 376-residue polypeptide: Metal tolerance protein 6 (376 aa).

The interval 1–28 (MAAAAGVAAGTGRGSGEGEELLPNAVEG) is disordered. Topologically, residues 1 to 123 (MAAAAGVAAG…CEKVARSEAL (123 aa)) are cytoplasmic. Residues 124–144 (AIRLSNIANMVLFAAKVYASI) traverse the membrane as a helical segment. Residues 145 to 149 (RSGSL) lie on the Vacuolar side of the membrane. A helical membrane pass occupies residues 150 to 170 (AIIASTLDSLLDLLSGFILWF). The Cytoplasmic segment spans residues 171-191 (TAFSKKTSNPYRYPIGKRRMQ). A helical transmembrane segment spans residues 192–212 (PLGILVFASVMATLGLQIILE). Over 213 to 231 (STRSLFYDGDTFRLTKEQE) the chain is Vacuolar. The helical transmembrane segment at 232 to 252 (KWVVDIMLSVTSVKLLLVVYC) threads the bilayer. The Cytoplasmic portion of the chain corresponds to 253–376 (RSFTNEILAI…PEHARSHDTL (124 aa)).

It belongs to the cation diffusion facilitator (CDF) transporter (TC 2.A.4) family. SLC30A subfamily.

The protein localises to the vacuole membrane. Involved in sequestration of excess metal in the cytoplasm into vacuoles to maintain metal homeostasis. This chain is Metal tolerance protein 6 (MTP6), found in Oryza sativa subsp. japonica (Rice).